The sequence spans 475 residues: 3-isopropylmalate dehydratase large subunit 1 (475 aa).

Residues Cys353, Cys413, and Cys416 each contribute to the [4Fe-4S] cluster site.

It belongs to the aconitase/IPM isomerase family. LeuC type 1 subfamily. In terms of assembly, heterodimer of LeuC and LeuD. [4Fe-4S] cluster is required as a cofactor.

The catalysed reaction is (2R,3S)-3-isopropylmalate = (2S)-2-isopropylmalate. The protein operates within amino-acid biosynthesis; L-leucine biosynthesis; L-leucine from 3-methyl-2-oxobutanoate: step 2/4. Functionally, catalyzes the isomerization between 2-isopropylmalate and 3-isopropylmalate, via the formation of 2-isopropylmaleate. This Mannheimia succiniciproducens (strain KCTC 0769BP / MBEL55E) protein is 3-isopropylmalate dehydratase large subunit 1.